The chain runs to 172 residues: Neudesin (172 aa).

Positions 1–31 are cleaved as a signal peptide; sequence MVGPAPRRRLRPLAALALVLALAPGLPTARA. One can recognise a Cytochrome b5 heme-binding domain in the interval 44-129; the sequence is VRLFTEEELA…KELEALDEVF (86 aa). An N6-acetyllysine modification is found at K136. Residues 151–172 form a disordered region; that stretch reads DGSPNLDFKPEDQPHFDIKDEF. The span at 158–172 shows a compositional bias: basic and acidic residues; the sequence is FKPEDQPHFDIKDEF.

It belongs to the cytochrome b5 family. MAPR subfamily. As to quaternary structure, interacts with PINK1 and PARK7. As to expression, ubiquitously expressed with high expression in heart. Over-expressed in various tumors including carcinomas of the uterine cervix, lymphoma, colon, lung, skin and leukemia, as well as carcinoma of the breast.

The protein localises to the secreted. Its subcellular location is the extracellular space. It is found in the mitochondrion. It localises to the endoplasmic reticulum. Functionally, acts as a neurotrophic factor in postnatal mature neurons enhancing neuronal survival. Promotes cell proliferation and neurogenesis in undifferentiated neural progenitor cells at the embryonic stage and inhibits differentiation of astrocytes. Its neurotrophic activity is exerted via MAPK1/ERK2, MAPK3/ERK1 and AKT1/AKT pathways. Neurotrophic activity is enhanced by binding to heme. Also acts as an anorexigenic neurotrophic factor that contributes to energy balance. The sequence is that of Neudesin from Homo sapiens (Human).